We begin with the raw amino-acid sequence, 333 residues long: Phenylalanine--tRNA ligase alpha subunit (333 aa).

Position 254 (E254) interacts with Mg(2+).

It belongs to the class-II aminoacyl-tRNA synthetase family. Phe-tRNA synthetase alpha subunit type 1 subfamily. Tetramer of two alpha and two beta subunits. It depends on Mg(2+) as a cofactor.

It localises to the cytoplasm. It carries out the reaction tRNA(Phe) + L-phenylalanine + ATP = L-phenylalanyl-tRNA(Phe) + AMP + diphosphate + H(+). The chain is Phenylalanine--tRNA ligase alpha subunit from Xylella fastidiosa (strain M23).